The primary structure comprises 368 residues: DNA replication and repair protein RecF (368 aa).

Residue 30–37 coordinates ATP; that stretch reads GDNGAGKT.

It belongs to the RecF family.

It localises to the cytoplasm. Its function is as follows. The RecF protein is involved in DNA metabolism; it is required for DNA replication and normal SOS inducibility. RecF binds preferentially to single-stranded, linear DNA. It also seems to bind ATP. The sequence is that of DNA replication and repair protein RecF from Xanthomonas euvesicatoria pv. vesicatoria (strain 85-10) (Xanthomonas campestris pv. vesicatoria).